We begin with the raw amino-acid sequence, 140 residues long: Auxin-responsive protein IAA26 (140 aa).

Residues 1-40 are disordered; it reads MASYGDDGVELTELTLGPPGASARRARRGRKNGHPPPSSS. The short motif at 14-18 is the EAR-like (transcriptional repression) element; sequence LTLGP. A compositionally biased stretch (basic residues) spans 24–33; the sequence is RRARRGRKNG. The PB1 domain maps to 45–130; sequence AYFVKVSMDG…SCKRMRVMRA (86 aa).

It belongs to the Aux/IAA family. Homodimers and heterodimers. As to expression, expressed in roots, seedlings and flowers.

It is found in the nucleus. Its function is as follows. Aux/IAA proteins are short-lived transcriptional factors that function as repressors of early auxin response genes at low auxin concentrations. The sequence is that of Auxin-responsive protein IAA26 (IAA26) from Oryza sativa subsp. japonica (Rice).